We begin with the raw amino-acid sequence, 437 residues long: Adenosylhomocysteinase (437 aa).

Substrate-binding residues include T58, D133, and E158. 159 to 161 is an NAD(+) binding site; it reads TTT. Substrate contacts are provided by K188 and D192. Residues N193, 224 to 229, E245, 301 to 303, and N348 contribute to the NAD(+) site; these read GDVGKG and VGH.

Belongs to the adenosylhomocysteinase family. As to quaternary structure, homotetramer. NAD(+) is required as a cofactor.

It catalyses the reaction S-adenosyl-L-homocysteine + H2O = L-homocysteine + adenosine. It functions in the pathway amino-acid biosynthesis; L-homocysteine biosynthesis; L-homocysteine from S-adenosyl-L-homocysteine: step 1/1. Functionally, adenosylhomocysteine is a competitive inhibitor of S-adenosyl-L-methionine-dependent methyl transferase reactions; therefore adenosylhomocysteinase may play a key role in the control of methylations via regulation of the intracellular concentration of adenosylhomocysteine. The protein is Adenosylhomocysteinase (ahcy-1) of Caenorhabditis elegans.